The chain runs to 62 residues: Calmodulin regulator protein PCP4 (62 aa).

The disordered stretch occupies residues 1–40 (MSERQGAGTTNGKDKPSGENDGQKKVQEEFDIDMDAPETE). Positions 12-28 (GKDKPSGENDGQKKVQE) are enriched in basic and acidic residues. Residues 28–40 (EEFDIDMDAPETE) form an acidic; binds calcium and is required for modulating the calcium-binding kinetics of calmodulin region. An IQ domain is found at 39–62 (TERAAVAIQSQFRKFQKKKAGSQS).

It belongs to the PCP4 family. Binds to both calcium-free and calcium-bound calmodulin. The affinity for the calcium-bound form is 50-fold greater.

Functionally, functions as a modulator of calcium-binding by calmodulin. Thereby, regulates calmodulin activity and the different processes it controls. For instance, may play a role in neuronal differentiation through activation of calmodulin-dependent kinase signaling pathways. The chain is Calmodulin regulator protein PCP4 from Bos taurus (Bovine).